A 448-amino-acid chain; its full sequence is Adenylosuccinate synthetase (448 aa).

GTP is bound by residues 36–42 and 64–66; these read GDEGKGK and GHT. Residue Asp-37 is the Proton acceptor of the active site. Mg(2+)-binding residues include Asp-37 and Gly-64. Residues 37–40, 62–65, Thr-154, Arg-168, Asn-246, Thr-261, and Arg-325 contribute to the IMP site; these read DEGK and NAGH. His-65 acts as the Proton donor in catalysis. 321 to 327 provides a ligand contact to substrate; the sequence is VTTKRKR. GTP-binding positions include Arg-327, 353–355, and 436–438; these read KLD and GVG.

The protein belongs to the adenylosuccinate synthetase family. As to quaternary structure, homodimer. It depends on Mg(2+) as a cofactor.

It is found in the cytoplasm. The enzyme catalyses IMP + L-aspartate + GTP = N(6)-(1,2-dicarboxyethyl)-AMP + GDP + phosphate + 2 H(+). Its pathway is purine metabolism; AMP biosynthesis via de novo pathway; AMP from IMP: step 1/2. Functionally, plays an important role in the de novo pathway and in the salvage pathway of purine nucleotide biosynthesis. Catalyzes the first committed step in the biosynthesis of AMP from IMP. In Drosophila virilis (Fruit fly), this protein is Adenylosuccinate synthetase.